Reading from the N-terminus, the 455-residue chain is GTPase Der (455 aa).

2 consecutive EngA-type G domains span residues 4–169 and 178–355; these read PIVA…PKDQ and LRVS…GQHQ. GTP contacts are provided by residues 10–17, 57–61, 120–123, 184–191, 233–237, and 298–301; these read GRPNVGKS, DTGGL, NKLE, DTAGI, and NKWD. Positions 356-441 constitute a KH-like domain; that stretch reads RRVSTSVLNE…PVRFIFRGKP (86 aa).

The protein belongs to the TRAFAC class TrmE-Era-EngA-EngB-Septin-like GTPase superfamily. EngA (Der) GTPase family. In terms of assembly, associates with the 50S ribosomal subunit.

Functionally, GTPase that plays an essential role in the late steps of ribosome biogenesis. This is GTPase Der from Gloeobacter violaceus (strain ATCC 29082 / PCC 7421).